Here is a 749-residue protein sequence, read N- to C-terminus: 1,4-alpha-glucan branching enzyme GlgB (749 aa).

Asp415 functions as the Nucleophile in the catalytic mechanism. Catalysis depends on Glu468, which acts as the Proton donor.

Belongs to the glycosyl hydrolase 13 family. GlgB subfamily. As to quaternary structure, monomer.

The catalysed reaction is Transfers a segment of a (1-&gt;4)-alpha-D-glucan chain to a primary hydroxy group in a similar glucan chain.. Its pathway is glycan biosynthesis; glycogen biosynthesis. In terms of biological role, catalyzes the formation of the alpha-1,6-glucosidic linkages in glycogen by scission of a 1,4-alpha-linked oligosaccharide from growing alpha-1,4-glucan chains and the subsequent attachment of the oligosaccharide to the alpha-1,6 position. The chain is 1,4-alpha-glucan branching enzyme GlgB from Nitrosococcus oceani (strain ATCC 19707 / BCRC 17464 / JCM 30415 / NCIMB 11848 / C-107).